The sequence spans 576 residues: Peroxisomal targeting signal receptor (576 aa).

A Glycyl cysteine thioester (Cys-Gly) (interchain with G-Cter in ubiquitin) cross-link involves residue Cys10. The segment at 11–33 is amphipathic helix 1 (AH1); the sequence is AAGSNPLAQFTKHTQHDTSLQQS. Lys22 participates in a covalent cross-link: Glycyl lysine isopeptide (Lys-Gly) (interchain with G-Cter in ubiquitin). Residues 58 to 75 form an amphipathic helix 2 (AH2) region; sequence RQQMDQFMQQQNNPAFNF. Short sequence motifs (wxxxF/Y motif) lie at residues 100–104 and 128–132; these read WNQEF and WAQDF. Residues 176 to 195 form a disordered region; it reads AQMQQQNPAQAQTSEQSQTQ. The short motif at 196–200 is the WxxxF/Y motif 3 element; that stretch reads WEDQF. Residues 224–240 form an amphipathic helix 4 (AH4) region; the sequence is FEQVWDDIQVSYADVEL. Positions 249 to 253 match the WxxxF/Y motif 4 motif; sequence WEKDF. TPR repeat units follow at residues 278-311, 312-345, 346-383, 384-421, 422-455, 456-489, and 490-523; these read PDAYEIGMRLMESGAKLSEAGLAFEAAVQQDPKH, VDAWLKLGEVQTQNEKESDGIAALEKCLELDPTN, LAALMTLAISYINDGYDNAAYATLERWIETKYPDIASR, ARSSNPDLDGGDRIEQNKRVTELFMKAAQLSPDVASMD, ADVQTGLGVLFYSMEEFDKTIDCFKAAIEVEPDK, ALNWNRLGAALANYNKPEEAVEAYSRALQLNPNF, and VRARYNLGVSFINMGRYKEAVEHLLTGISLHEVE.

Belongs to the peroxisomal targeting signal receptor family. As to quaternary structure, interacts (via WxxxF/Y and LVxEF motifs) with PEX14; promoting translocation through the PEX13-PEX14 docking complex. Interacts with PEX8. Post-translationally, a disulfide bond is created between Cys-10 and Cys-338 or Cys-444. Monoubiquitinated at Cys-10 by PEX2 during PEX5 passage through the retrotranslocation channel: monoubiquitination acts as a signal for PEX5 extraction and is required for proper export from peroxisomes and recycling. When PEX5 recycling is compromised, polyubiquitinated at Lys-22 by PEX10 during its passage through the retrotranslocation channel, leading to its degradation.

The protein resides in the peroxisome membrane. It is found in the cytoplasm. The protein localises to the cytosol. It localises to the peroxisome matrix. Its function is as follows. Receptor that mediates peroxisomal import of proteins containing a C-terminal PTS1-type tripeptide peroxisomal targeting signal (SKL-type). Binds to cargo proteins containing a PTS1 peroxisomal targeting signal in the cytosol, and translocates them into the peroxisome matrix by passing through the peroxisomal docking complex along with cargo proteins. PEX5 receptor is then retrotranslocated into the cytosol, leading to release of bound cargo in the peroxisome matrix, and reset for a subsequent peroxisome import cycle. Required for PEX7 ubiquitination. In Komagataella phaffii (strain GS115 / ATCC 20864) (Yeast), this protein is Peroxisomal targeting signal receptor.